The following is a 2555-amino-acid chain: Ubiquitin carboxyl-terminal hydrolase 9Y (2555 aa).

Positions methionine 1–proline 66 are disordered. The segment covering asparagine 13–alanine 45 has biased composition (polar residues). The residue at position 589 (serine 589) is a Phosphoserine. A Phosphothreonine modification is found at threonine 591. The segment at asparagine 972–aspartate 997 is disordered. A compositionally biased stretch (low complexity) spans proline 974–serine 984. The 400-residue stretch at valine 1559–methionine 1958 folds into the USP domain. Catalysis depends on cysteine 1568, which acts as the Nucleophile. The Zn(2+) site is built by cysteine 1729, histidine 1731, cysteine 1773, and cysteine 1776. The Proton acceptor role is filled by histidine 1881. Serine 2444 carries the post-translational modification Phosphoserine. Residues proline 2476–alanine 2485 are compositionally biased toward acidic residues. The segment at proline 2476–glutamine 2555 is disordered. Polar residues-rich tracts occupy residues proline 2504–valine 2514 and asparagine 2528–glutamine 2555. Tyrosine 2541 carries the phosphotyrosine modification. Serine 2548 bears the Phosphoserine mark.

The protein belongs to the peptidase C19 family. As to expression, widely expressed in embryonic and adult tissues.

The catalysed reaction is Thiol-dependent hydrolysis of ester, thioester, amide, peptide and isopeptide bonds formed by the C-terminal Gly of ubiquitin (a 76-residue protein attached to proteins as an intracellular targeting signal).. Its pathway is protein modification; protein ubiquitination. Functionally, deubiquitinase that mediates deubiquitination of target proteins. May stabilize target proteins that are important for male germ cell development. The protein is Ubiquitin carboxyl-terminal hydrolase 9Y of Homo sapiens (Human).